The sequence spans 372 residues: UDP-N-acetylglucosamine--N-acetylmuramyl-(pentapeptide) pyrophosphoryl-undecaprenol N-acetylglucosamine transferase (372 aa).

UDP-N-acetyl-alpha-D-glucosamine is bound by residues 10-12 (TGG), N124, R166, S196, I256, and Q301.

It belongs to the glycosyltransferase 28 family. MurG subfamily.

The protein localises to the cell membrane. It carries out the reaction di-trans,octa-cis-undecaprenyl diphospho-N-acetyl-alpha-D-muramoyl-L-alanyl-D-glutamyl-meso-2,6-diaminopimeloyl-D-alanyl-D-alanine + UDP-N-acetyl-alpha-D-glucosamine = di-trans,octa-cis-undecaprenyl diphospho-[N-acetyl-alpha-D-glucosaminyl-(1-&gt;4)]-N-acetyl-alpha-D-muramoyl-L-alanyl-D-glutamyl-meso-2,6-diaminopimeloyl-D-alanyl-D-alanine + UDP + H(+). It participates in cell wall biogenesis; peptidoglycan biosynthesis. Cell wall formation. Catalyzes the transfer of a GlcNAc subunit on undecaprenyl-pyrophosphoryl-MurNAc-pentapeptide (lipid intermediate I) to form undecaprenyl-pyrophosphoryl-MurNAc-(pentapeptide)GlcNAc (lipid intermediate II). This is UDP-N-acetylglucosamine--N-acetylmuramyl-(pentapeptide) pyrophosphoryl-undecaprenol N-acetylglucosamine transferase from Desulforamulus reducens (strain ATCC BAA-1160 / DSM 100696 / MI-1) (Desulfotomaculum reducens).